A 612-amino-acid chain; its full sequence is Bifunctional lycopene cyclase/phytoene synthase (612 aa).

The segment at Met-1–Asn-268 is lycopene beta-cyclase. 7 helical membrane passes run Trp-3–Val-23, Leu-31–Leu-51, Leu-112–Ser-130, Ile-148–Gly-168, Gly-171–Ile-191, Asn-203–Leu-223, and Ile-246–Cys-266. A phytoene synthase region spans residues Thr-275–Lys-612.

It in the N-terminal section; belongs to the lycopene beta-cyclase family. This sequence in the C-terminal section; belongs to the phytoene/squalene synthase family.

It is found in the membrane. It catalyses the reaction all-trans-lycopene = gamma-carotene. The catalysed reaction is gamma-carotene = all-trans-beta-carotene. The enzyme catalyses 2 (2E,6E,10E)-geranylgeranyl diphosphate = 15-cis-phytoene + 2 diphosphate. Its pathway is carotenoid biosynthesis; beta-carotene biosynthesis. It participates in carotenoid biosynthesis; phytoene biosynthesis; all-trans-phytoene from geranylgeranyl diphosphate: step 1/1. Bifunctional enzyme; part of the car gene cluster that mediates the biosynthesis of neurosporaxanthin, a carboxylic apocarotenoid acting as an essential protective pigments and leading to orange pigmentation. CarAR catalyzes the first step of the pathway by converting geranylgeranyl diphosphate to phytoene, as well as the later cyclization step that transforms the carB product lycopene into gamma-carotene. CarAR also converts part of gamma-carotene into beta-carotene. Neurosporaxanthin is synthesized from geranyl-geranyl pyrophosphate (GGPP) through several enzymatic activities. Phytoene synthase activity performed by the bifunctional enzyme carAR first produces phytoene from geranyl-geranyl pyrophosphate (GGPP). The phytoene dehydrogenase carB then introduces 4 desaturations to lead to lycopene which is substrate of the carotene cyclase activity of carAR that leads to the production of gamma-carotene. CarB then performs a 5th desaturation reaction to yield torulene. Torulene is the substrate of the dioxidase carT that breaks the molecule, removing five carbon atoms to yield beta-apo-4'-carotenal, whereas the aldehyde dehydrogenase carD mediates the last step by converting beta-apo-4'-carotenal into neurosporaxanthin. The polypeptide is Bifunctional lycopene cyclase/phytoene synthase (Fusarium fujikuroi (Bakanae and foot rot disease fungus)).